Consider the following 275-residue polypeptide: MAVKNYKPTSPGRRFVTFSDFSEITKVEPEKSLLEPIKKTGGRNAQGRLTVRHQGGGHKRMFRIIDFKRNKDGIPAKVASIEYDPNRSARIALLNYADGEKRYILAPVGLEVGVIVESGPDADIKVGNCLPLRNIPVGTMVHNIELYPGAGAQMVRSAGAAAQLMAKEGKYANLRLPSGEMRLVLQECRATIGQVGNLEHENVTIGKAGRSRHLGIRPTVRGKVMNPVDHPHGGGEGRNPIGRNPSTPWGKLAMGVKTRGNKKSDRLIVKRRNKK.

The disordered stretch occupies residues 222 to 275 (GKVMNPVDHPHGGGEGRNPIGRNPSTPWGKLAMGVKTRGNKKSDRLIVKRRNKK).

This sequence belongs to the universal ribosomal protein uL2 family. Part of the 50S ribosomal subunit. Forms a bridge to the 30S subunit in the 70S ribosome.

One of the primary rRNA binding proteins. Required for association of the 30S and 50S subunits to form the 70S ribosome, for tRNA binding and peptide bond formation. It has been suggested to have peptidyltransferase activity; this is somewhat controversial. Makes several contacts with the 16S rRNA in the 70S ribosome. This chain is Large ribosomal subunit protein uL2, found in Desulforamulus reducens (strain ATCC BAA-1160 / DSM 100696 / MI-1) (Desulfotomaculum reducens).